Here is a 115-residue protein sequence, read N- to C-terminus: MMSAKDTVKVMVVMLAICFLARSDGKPIKKRSVSEIQLMHNLGKHLSSLERVEWLRKKLQDVHNFVALGASIVHRDGGSQRPRKKEDNVLVESHQKSLGEADKAAVDVLIKAKPQ.

The first 25 residues, Met-1–Gly-25, serve as a signal peptide directing secretion. A propeptide spanning residues Lys-26–Arg-31 is cleaved from the precursor. Residues Arg-51–Gly-69 are important for receptor binding. The segment at Arg-75 to Leu-98 is disordered.

Belongs to the parathyroid hormone family. Interacts with PTH1R (via N-terminal extracellular domain).

The protein localises to the secreted. Functionally, parathyroid hormone elevates calcium level by dissolving the salts in bone and preventing their renal excretion. Acts by binding to its receptor, PTH1R, activating G protein-coupled receptor signaling. Stimulates [1-14C]-2-deoxy-D-glucose (2DG) transport and glycogen synthesis in osteoblastic cells. The chain is Parathyroid hormone (PTH) from Sus scrofa (Pig).